The sequence spans 362 residues: 3-dehydroquinate synthase (362 aa).

NAD(+) is bound by residues 70–75 (DGEKYK), 104–108 (GVIGD), 128–129 (TT), Lys141, Lys150, and 168–171 (TLNT). Zn(2+) is bound by residues Glu183, His246, and His263.

The protein belongs to the sugar phosphate cyclases superfamily. Dehydroquinate synthase family. Requires Co(2+) as cofactor. Zn(2+) is required as a cofactor. NAD(+) serves as cofactor.

The protein resides in the cytoplasm. The enzyme catalyses 7-phospho-2-dehydro-3-deoxy-D-arabino-heptonate = 3-dehydroquinate + phosphate. It functions in the pathway metabolic intermediate biosynthesis; chorismate biosynthesis; chorismate from D-erythrose 4-phosphate and phosphoenolpyruvate: step 2/7. Functionally, catalyzes the conversion of 3-deoxy-D-arabino-heptulosonate 7-phosphate (DAHP) to dehydroquinate (DHQ). The chain is 3-dehydroquinate synthase from Haemophilus influenzae (strain 86-028NP).